Reading from the N-terminus, the 314-residue chain is Olfactory receptor 10A3 (314 aa).

Topologically, residues 1-25 (MKRQNQSCVVEFILLGFSNFPELQV) are extracellular. A glycan (N-linked (GlcNAc...) asparagine) is linked at Asn-5. The chain crosses the membrane as a helical span at residues 26–46 (QLFGVFLVIYVVTLMGNAIIT). At 47-54 (VIISLNQS) the chain is on the cytoplasmic side. A helical transmembrane segment spans residues 55-75 (LHVPMYLFLLNLSVVEVSFSA). Over 76–99 (VITPEMLVVLSTEKTMISFVGCFA) the chain is Extracellular. Cysteines 97 and 189 form a disulfide. Residues 100–120 (QMYFILLFGGTECFLLGAMAY) form a helical membrane-spanning segment. The Cytoplasmic segment spans residues 121–139 (DRFAAICHPLNYPVIMNRG). A helical transmembrane segment spans residues 140-160 (VFMKLVIFSWISGIMVATVQT). The Extracellular portion of the chain corresponds to 161–197 (TWVFSFPFCGPNEINHLFCETPPVLELVCADTFLFEI). Residues 198–217 (YAFTGTILIVMVPFLLILLS) form a helical membrane-spanning segment. At 218 to 237 (YIRVLFAILKMPSTTGRQKA) the chain is on the cytoplasmic side. A helical membrane pass occupies residues 238–258 (FSTCASHLTSVTLFYGTANMT). Topologically, residues 259–271 (YLQPKSGYSPETK) are extracellular. Residues 272–292 (KLISLAYTLLTPLLNPLIYSL) form a helical membrane-spanning segment. Topologically, residues 293-314 (RNSEMKRTLIKLWRRKVILHTF) are cytoplasmic.

The protein belongs to the G-protein coupled receptor 1 family.

Its subcellular location is the cell membrane. Functionally, odorant receptor. The protein is Olfactory receptor 10A3 (OR10A3) of Homo sapiens (Human).